The chain runs to 1033 residues: Probable beta-glucosidase E (1033 aa).

A disordered region spans residues M1 to V71. At M1–R161 the chain is on the cytoplasmic side. Composition is skewed to basic and acidic residues over residues S11–D20 and D59–V71. The helical; Signal-anchor for type II membrane protein transmembrane segment at T162 to V182 threads the bilayer. The Extracellular segment spans residues S183–Y1033. Residues N224, N232, and N418 are each glycosylated (N-linked (GlcNAc...) asparagine). Residue D446 is part of the active site. N-linked (GlcNAc...) asparagine glycosylation is found at N489, N528, N593, N909, N918, and N976.

It belongs to the glycosyl hydrolase 3 family.

The protein resides in the cell membrane. The enzyme catalyses Hydrolysis of terminal, non-reducing beta-D-glucosyl residues with release of beta-D-glucose.. The protein operates within glycan metabolism; cellulose degradation. Beta-glucosidases are one of a number of cellulolytic enzymes involved in the degradation of cellulosic biomass. Catalyzes the last step releasing glucose from the inhibitory cellobiose. The polypeptide is Probable beta-glucosidase E (bglE) (Aspergillus fumigatus (strain CBS 144.89 / FGSC A1163 / CEA10) (Neosartorya fumigata)).